The chain runs to 359 residues: Medium-wave-sensitive opsin 1 (359 aa).

Topologically, residues 1 to 47 (MAQRLTGEQTLDHYEDSTHASIFTYTNSNSTKGPFEGPNYHIAPRWV) are extracellular. The interval 12-38 (DHYEDSTHASIFTYTNSNSTKGPFEGP) is required for 11-cis-retinal regeneration. N-linked (GlcNAc...) asparagine glycosylation is present at N29. A helical membrane pass occupies residues 48–72 (YHLTSTWMILVVVASVFTNGLVLAA). Over 73–84 (TMRFKKLRHPLN) the chain is Cytoplasmic. A helical transmembrane segment spans residues 85 to 110 (WILVNLAVADLAETIIASTISVVNQI). The Extracellular segment spans residues 111–124 (YGYFVLGHPLCVIE). Cysteines 121 and 198 form a disulfide. A helical membrane pass occupies residues 125 to 144 (GYIVSLCGITGLWSLAIISW). Topologically, residues 145-163 (ERWLVVCKPFGNVRFDAKL) are cytoplasmic. Residues 164–187 (ATVGIVFSWVWAAIWTAPPIFGWS) form a helical membrane-spanning segment. The Extracellular portion of the chain corresponds to 188–213 (RYWPYGLKTSCGPDVFSGTSYPGVQS). Residues 214–241 (YMMVLMVTCCIFPLSIIVLCYLQVWLAI) form a helical membrane-spanning segment. Over 242 to 263 (RAVAKQQKESESTQKAEKEVTR) the chain is Cytoplasmic. The helical transmembrane segment at 264–287 (MVVVMVFAYCLCWGPYTFFACFAT) threads the bilayer. Residues 288–295 (AHPGYAFH) are Extracellular-facing. Residues 296 to 320 (PLVASLPSYFAKSATIYNPIIYVFM) form a helical membrane-spanning segment. K307 carries the N6-(retinylidene)lysine modification. Topologically, residues 321 to 359 (NRQFRNCILHLFGKKVDDSSELSSTSKTEVSSVSSVSPA) are cytoplasmic.

The protein belongs to the G-protein coupled receptor 1 family. Opsin subfamily. In terms of assembly, monomer. Homodimer. Homotetramer. N-glycosylated. O-glycosylated. In terms of processing, phosphorylated on some or all of the serine and threonine residues present in the C-terminal region. In terms of tissue distribution, expressed in retina (at protein level). Expressed in cone photoreceptor cells (at protein level).

Its subcellular location is the cell membrane. Functionally, visual pigments are the light-absorbing molecules that mediate vision. They consist of an apoprotein, opsin, covalently linked to cis-retinal. May increase spectral sensitivity in dim light. The polypeptide is Medium-wave-sensitive opsin 1 (Opn1mw) (Mus musculus (Mouse)).